Reading from the N-terminus, the 31-residue chain is Cytochrome b6-f complex subunit 6 (31 aa).

Residues 4 to 24 form a helical membrane-spanning segment; the sequence is VVSYLGILAAFALVTIGIFLV.

Belongs to the PetL family. As to quaternary structure, the 4 large subunits of the cytochrome b6-f complex are cytochrome b6, subunit IV (17 kDa polypeptide, PetD), cytochrome f and the Rieske protein, while the 4 small subunits are PetG, PetL, PetM and PetN. The complex functions as a dimer.

The protein resides in the plastid. The protein localises to the chloroplast thylakoid membrane. Component of the cytochrome b6-f complex, which mediates electron transfer between photosystem II (PSII) and photosystem I (PSI), cyclic electron flow around PSI, and state transitions. PetL is important for photoautotrophic growth as well as for electron transfer efficiency and stability of the cytochrome b6-f complex. The chain is Cytochrome b6-f complex subunit 6 from Mesostigma viride (Green alga).